A 229-amino-acid polypeptide reads, in one-letter code: Matrix protein (229 aa).

The segment covering 1–10 (MSSLKKILGL) has biased composition (low complexity). A disordered region spans residues 1 to 23 (MSSLKKILGLKGKGKKSKKLGIA). A dynamin binding motif is present at residues 2 to 4 (SSL). A PPXY motif motif is present at residues 24 to 27 (PPPY). The PTAP/PSAP motif signature appears at 37 to 40 (PSAP).

The protein belongs to the vesiculoviruses matrix protein family. Homomultimer. Interacts with viral nucleocapsid; this interaction contributes to the virion assembly. Interacts with the viral envelope glycoprotein; this interaction contributes to the virion assembly. Interacts with host RAE1-NUP98 complex. Interacts with host NEDD4 and TSG101. Interacts with host dynamin. Interacts with host NDUFAF4; the interaction inhibits viral propagation and is independent of interferon activation. Interacts with host GTF2H5; the interaction may inhibit host transcription. In terms of processing, phosphorylated by host.

The protein resides in the virion. Its subcellular location is the host endomembrane system. The protein localises to the host nucleus membrane. It localises to the host nucleus. It is found in the host cytoplasm. Forms a double layer around the helical nucleocapsid, the inner matrix layer binding to the N helix and the outer matrix layer binding to the envelope glycoprotein. Plays a major role in assembly and budding of virion, by recruiting cellular partners of the ESCRT complexes that play a key role in releasing the budding particle from the host membrane. Condensates the ribonucleocapsid core during virus assembly. Inhibits the host mRNA nuclear export thereby inducing the shut off of cellular transcription and preventing the interferon signaling and the establishment of antiviral state in infected cells. This shutoff presumably inhibits interferon signaling and thus establishment of antiviral state in virus infected cells. Induces cell-rounding, cytoskeleton disorganization and apoptosis in infected cell. Inhibits host transcription, possibly through interaction with host DNA repair factor IIH/TFIIH GTF2H5 subunit. This chain is Matrix protein (M), found in Vesicular stomatitis Indiana virus (strain 98COE North America) (VSIV).